A 180-amino-acid chain; its full sequence is Large ribosomal subunit protein uL5c (180 aa).

This sequence belongs to the universal ribosomal protein uL5 family. In terms of assembly, part of the 50S ribosomal subunit; contacts the 5S rRNA.

It is found in the plastid. It localises to the chloroplast. In terms of biological role, binds 5S rRNA, forms part of the central protuberance of the 50S subunit. The polypeptide is Large ribosomal subunit protein uL5c (rpl5) (Stigeoclonium helveticum (Green alga)).